Reading from the N-terminus, the 208-residue chain is MFISFEGIDGSGKSTQVALFREYLERNSMEYVFIREPGGTQAGEDIREILLHNEYKLFPETELLLFMASRAQIVREVIIPALKKKKLVLADRFLDSSVAYQGYGRGLSIQMVTTLNEFSTGGVTPHLTLFIDVPVDVAVKRMRREMKHDKIEMESLDFFKRVRQGYLELAKRDPKRILVIDGTMSVEKIHEQVVKEFLLCLKKLGHGL.

Residue 7-14 (GIDGSGKS) participates in ATP binding.

Belongs to the thymidylate kinase family.

The catalysed reaction is dTMP + ATP = dTDP + ADP. In terms of biological role, phosphorylation of dTMP to form dTDP in both de novo and salvage pathways of dTTP synthesis. The chain is Thymidylate kinase from Kosmotoga olearia (strain ATCC BAA-1733 / DSM 21960 / TBF 19.5.1).